The following is a 499-amino-acid chain: Maturase K (499 aa).

It belongs to the intron maturase 2 family. MatK subfamily.

The protein localises to the plastid. The protein resides in the chloroplast. Functionally, usually encoded in the trnK tRNA gene intron. Probably assists in splicing its own and other chloroplast group II introns. The protein is Maturase K of Camellia sasanqua (Christmas camellia).